The primary structure comprises 228 residues: Cutinase (228 aa).

An N-terminal signal peptide occupies residues 1-16 (MKFLSIISLAVSLVAA). Cysteines 49 and 129 form a disulfide. S140 (nucleophile) is an active-site residue. An intrachain disulfide couples C191 to C198. D195 is a catalytic residue. Catalysis depends on H208, which acts as the Proton donor/acceptor.

It belongs to the cutinase family. In terms of processing, the 2 disulfide bonds play a critical role in holding the catalytic residues in juxta-position; reduction of the disulfide bridges results in the complete inactivation of the enzyme.

The protein localises to the secreted. The enzyme catalyses cutin + H2O = cutin monomers.. With respect to regulation, partially inhibited by berberine; higher inhibitory effects are observed with longer chain polyester substrates. Catalyzes the hydrolysis of complex carboxylic polyesters found in the cell wall of plants. Degrades cutin, a macromolecule that forms the structure of the plant cuticle. Allows pathogenic fungi to penetrate through the cuticular barrier into the host plant during the initial stage of fungal infection. The polypeptide is Cutinase (CUTA) (Colletotrichum truncatum (Anthracnose fungus)).